A 270-amino-acid polypeptide reads, in one-letter code: Aliphatic sulfonates import ATP-binding protein SsuB 1 (270 aa).

Positions 18-232 (VQLRNVVRQF…DSGQAGFQLI (215 aa)) constitute an ABC transporter domain. An ATP-binding site is contributed by 50–57 (GASGSGKT). Residues 247–270 (PDTAPQASAPDSTFSELRRVASAR) are disordered. Residues 251–261 (PQASAPDSTFS) are compositionally biased toward polar residues.

This sequence belongs to the ABC transporter superfamily. Aliphatic sulfonates importer (TC 3.A.1.17.2) family. The complex is composed of two ATP-binding proteins (SsuB), two transmembrane proteins (SsuC) and a solute-binding protein (SsuA).

The protein resides in the cell inner membrane. The catalysed reaction is ATP + H2O + aliphatic sulfonate-[sulfonate-binding protein]Side 1 = ADP + phosphate + aliphatic sulfonateSide 2 + [sulfonate-binding protein]Side 1.. Functionally, part of the ABC transporter complex SsuABC involved in aliphatic sulfonates import. Responsible for energy coupling to the transport system. This chain is Aliphatic sulfonates import ATP-binding protein SsuB 1, found in Pseudomonas syringae pv. tomato (strain ATCC BAA-871 / DC3000).